The following is a 239-amino-acid chain: Uridylate kinase (239 aa).

Residue 13–16 (KVSG) coordinates ATP. Gly-55 contacts UMP. Gly-56 and Arg-60 together coordinate ATP. Residues Asp-75 and 136–143 (TGNPFCTT) each bind UMP. 4 residues coordinate ATP: Thr-163, Gln-164, Tyr-169, and Asp-172.

The protein belongs to the UMP kinase family. As to quaternary structure, homohexamer.

The protein resides in the cytoplasm. The enzyme catalyses UMP + ATP = UDP + ADP. The protein operates within pyrimidine metabolism; CTP biosynthesis via de novo pathway; UDP from UMP (UMPK route): step 1/1. Its activity is regulated as follows. Inhibited by UTP. Catalyzes the reversible phosphorylation of UMP to UDP. The chain is Uridylate kinase from Rickettsia bellii (strain RML369-C).